The following is a 60-amino-acid chain: Large ribosomal subunit protein uL30 (60 aa).

Belongs to the universal ribosomal protein uL30 family. In terms of assembly, part of the 50S ribosomal subunit.

The protein is Large ribosomal subunit protein uL30 of Dehalococcoides mccartyi (strain ATCC BAA-2266 / KCTC 15142 / 195) (Dehalococcoides ethenogenes (strain 195)).